Reading from the N-terminus, the 462-residue chain is ATP synthase subunit beta (462 aa).

152–159 (GGAGVGKT) contributes to the ATP binding site.

Belongs to the ATPase alpha/beta chains family. In terms of assembly, F-type ATPases have 2 components, CF(1) - the catalytic core - and CF(0) - the membrane proton channel. CF(1) has five subunits: alpha(3), beta(3), gamma(1), delta(1), epsilon(1). CF(0) has three main subunits: a(1), b(2) and c(9-12). The alpha and beta chains form an alternating ring which encloses part of the gamma chain. CF(1) is attached to CF(0) by a central stalk formed by the gamma and epsilon chains, while a peripheral stalk is formed by the delta and b chains.

Its subcellular location is the cell inner membrane. The enzyme catalyses ATP + H2O + 4 H(+)(in) = ADP + phosphate + 5 H(+)(out). Its function is as follows. Produces ATP from ADP in the presence of a proton gradient across the membrane. The catalytic sites are hosted primarily by the beta subunits. The polypeptide is ATP synthase subunit beta (Aeromonas hydrophila subsp. hydrophila (strain ATCC 7966 / DSM 30187 / BCRC 13018 / CCUG 14551 / JCM 1027 / KCTC 2358 / NCIMB 9240 / NCTC 8049)).